We begin with the raw amino-acid sequence, 884 residues long: Protein P (884 aa).

The segment at 1-184 (MHPFSRLFRN…GKPYSWEHRQ (184 aa)) is terminal protein domain (TP). The interval 185 to 387 (LVQHNGQQHK…YCIHHIVSSL (203 aa)) is spacer. A disordered region spans residues 299–345 (RNSGHTTWFSSASNSNKSRSREKAYSSNSTSKRYSPPLNYEKSDFSS). The segment at 388-729 (DDWGPCTVTG…YEELWPVVRQ (342 aa)) is polymerase/reverse transcriptase domain (RT). Residues 398-639 (DVTIKSPRTP…NHLHFMGYVI (242 aa)) form the Reverse transcriptase domain. Mg(2+) is bound by residues Asp-470, Asp-590, and Asp-591.

Belongs to the hepadnaviridae P protein family.

The catalysed reaction is DNA(n) + a 2'-deoxyribonucleoside 5'-triphosphate = DNA(n+1) + diphosphate. The enzyme catalyses Endonucleolytic cleavage to 5'-phosphomonoester.. With respect to regulation, activated by host HSP70 and HSP40 in vitro to be able to bind the epsilon loop of the pgRNA. Because deletion of the RNase H region renders the protein partly chaperone-independent, the chaperones may be needed indirectly to relieve occlusion of the RNA-binding site by this domain. Inhibited by several reverse-transcriptase inhibitors: Lamivudine, Adefovir and Entecavir. Its function is as follows. Multifunctional enzyme that converts the viral RNA genome into dsDNA in viral cytoplasmic capsids. This enzyme displays a DNA polymerase activity that can copy either DNA or RNA templates, and a ribonuclease H (RNase H) activity that cleaves the RNA strand of RNA-DNA heteroduplexes in a partially processive 3'- to 5'-endonucleasic mode. Neo-synthesized pregenomic RNA (pgRNA) are encapsidated together with the P protein, and reverse-transcribed inside the nucleocapsid. Initiation of reverse-transcription occurs first by binding the epsilon loop on the pgRNA genome, and is initiated by protein priming, thereby the 5'-end of (-)DNA is covalently linked to P protein. Partial (+)DNA is synthesized from the (-)DNA template and generates the relaxed circular DNA (RC-DNA) genome. After budding and infection, the RC-DNA migrates in the nucleus, and is converted into a plasmid-like covalently closed circular DNA (cccDNA). The activity of P protein does not seem to be necessary for cccDNA generation, and is presumably released from (+)DNA by host nuclear DNA repair machinery. The polypeptide is Protein P (Woodchuck hepatitis B virus (isolate 7) (WHV)).